The following is a 160-amino-acid chain: Transcription antitermination protein NusB (160 aa).

Belongs to the NusB family.

In terms of biological role, involved in transcription antitermination. Required for transcription of ribosomal RNA (rRNA) genes. Binds specifically to the boxA antiterminator sequence of the ribosomal RNA (rrn) operons. The protein is Transcription antitermination protein NusB of Salinibacter ruber (strain DSM 13855 / M31).